The sequence spans 262 residues: MRVALGIEYCGTGFHGWQSQAGGGTVQDALEAALGEVAGVPVGVLCAGRTDAGVHATHQVAHFDAPVDRPLTAWVRGVNSHLPEGVAVRWAQPVAEDFHARFSARGRRYRYLLLNRPQRPGLWQGRVGWFHWPLELEAMQEACLRLLGEHDFSAFRAANCQAKSPVKHMSRAEVRQCGNMFVFDFEASAFLHHMVRNLVGTLVYIGKGTQQPDWIEALLQTKDRKLAAPTFSPDGLYFRGPVYEPHWGLPDPNDDFLDGMLK.

The Nucleophile role is filled by D51. Position 109 (Y109) interacts with substrate.

It belongs to the tRNA pseudouridine synthase TruA family. Homodimer.

The catalysed reaction is uridine(38/39/40) in tRNA = pseudouridine(38/39/40) in tRNA. In terms of biological role, formation of pseudouridine at positions 38, 39 and 40 in the anticodon stem and loop of transfer RNAs. The chain is tRNA pseudouridine synthase A from Dechloromonas aromatica (strain RCB).